We begin with the raw amino-acid sequence, 169 residues long: Photosystem I assembly protein Ycf3 (169 aa).

TPR repeat units lie at residues 36–69 (AFTY…EIDP), 73–106 (SYIL…NPFL), and 121–154 (GEQA…TPGN).

Belongs to the Ycf3 family.

Its subcellular location is the plastid. The protein resides in the chloroplast thylakoid membrane. Its function is as follows. Essential for the assembly of the photosystem I (PSI) complex. May act as a chaperone-like factor to guide the assembly of the PSI subunits. In Cucumis sativus (Cucumber), this protein is Photosystem I assembly protein Ycf3.